Here is an 815-residue protein sequence, read N- to C-terminus: Glycogen phosphorylase (815 aa).

Residue K662 is modified to N6-(pyridoxal phosphate)lysine.

It belongs to the glycogen phosphorylase family. It depends on pyridoxal 5'-phosphate as a cofactor.

The catalysed reaction is [(1-&gt;4)-alpha-D-glucosyl](n) + phosphate = [(1-&gt;4)-alpha-D-glucosyl](n-1) + alpha-D-glucose 1-phosphate. Functionally, phosphorylase is an important allosteric enzyme in carbohydrate metabolism. Enzymes from different sources differ in their regulatory mechanisms and in their natural substrates. However, all known phosphorylases share catalytic and structural properties. This is Glycogen phosphorylase (glgP) from Shigella flexneri.